We begin with the raw amino-acid sequence, 65 residues long: Large ribosomal subunit protein bL35 (65 aa).

The span at 1-16 (MPKQKTHRASAKRFKR) shows a compositional bias: basic residues. Residues 1 to 21 (MPKQKTHRASAKRFKRTGSGG) are disordered.

Belongs to the bacterial ribosomal protein bL35 family.

The protein is Large ribosomal subunit protein bL35 of Streptococcus pyogenes serotype M18 (strain MGAS8232).